We begin with the raw amino-acid sequence, 658 residues long: Biosynthetic arginine decarboxylase (658 aa).

Lys127 carries the N6-(pyridoxal phosphate)lysine modification. 307–317 (FDVGGGLGVDY) lines the substrate pocket.

Belongs to the Orn/Lys/Arg decarboxylase class-II family. SpeA subfamily. Homotetramer. The cofactor is pyridoxal 5'-phosphate. Mg(2+) is required as a cofactor. In terms of processing, processed post-translationally to a 70 kDa mature form. The N-terminus is blocked.

It localises to the periplasm. It catalyses the reaction L-arginine + H(+) = agmatine + CO2. The protein operates within amine and polyamine biosynthesis; agmatine biosynthesis; agmatine from L-arginine: step 1/1. With respect to regulation, down-regulated by polyamine end products putrescine and spermidine. Functionally, catalyzes the biosynthesis of agmatine from arginine. The chain is Biosynthetic arginine decarboxylase (speA) from Escherichia coli (strain K12).